The following is a 208-amino-acid chain: Uracil phosphoribosyltransferase (208 aa).

Residues Arg-78, Arg-103, and 130–138 (DPMLATGGS) each bind 5-phospho-alpha-D-ribose 1-diphosphate. Residues Ile-193 and 198–200 (GDA) each bind uracil. 5-phospho-alpha-D-ribose 1-diphosphate is bound at residue Asp-199.

The protein belongs to the UPRTase family. Requires Mg(2+) as cofactor.

It carries out the reaction UMP + diphosphate = 5-phospho-alpha-D-ribose 1-diphosphate + uracil. It functions in the pathway pyrimidine metabolism; UMP biosynthesis via salvage pathway; UMP from uracil: step 1/1. With respect to regulation, allosterically activated by GTP. Its function is as follows. Catalyzes the conversion of uracil and 5-phospho-alpha-D-ribose 1-diphosphate (PRPP) to UMP and diphosphate. The polypeptide is Uracil phosphoribosyltransferase (Escherichia fergusonii (strain ATCC 35469 / DSM 13698 / CCUG 18766 / IAM 14443 / JCM 21226 / LMG 7866 / NBRC 102419 / NCTC 12128 / CDC 0568-73)).